Here is a 447-residue protein sequence, read N- to C-terminus: Voltage-gated purine nucleotide uniporter SLC17A9 (447 aa).

The tract at residues 1-26 is disordered; the sequence is MPSQRSSLMQPIPEETRKTPSAAAED. Helical transmembrane passes span 40–60, 74–94, 103–123, 129–149, 169–189, 192–212, 252–272, 287–307, 327–347, 380–400, and 413–433; these read ILLL…VCTV, GIVL…GGHL, VILL…LLAH, LAFL…YFPA, TVGA…SVLL, CGWQ…AYYV, VWAA…LLSW, WVFN…SGFI, VMGL…TSFL, GFLF…GVCL, and CVFH…LVFG.

The protein belongs to the major facilitator superfamily. Sodium/anion cotransporter family. In terms of tissue distribution, in brain, specifically expressed in the medulla and is associated with chromaffin granules (at protein level). Predominantly expressed in adrenal gland, brain and thyroid.

Its subcellular location is the cytoplasmic vesicle. It localises to the secretory vesicle. The protein localises to the chromaffin granule membrane. The protein resides in the secretory vesicle membrane. It is found in the lysosome membrane. It carries out the reaction ATP(in) = ATP(out). The catalysed reaction is ADP(in) = ADP(out). The enzyme catalyses GTP(in) = GTP(out). Activity is chloride-dependent. In terms of biological role, voltage-gated ATP nucleotide uniporter that can also transport the purine nucleotides ADP and GTP. Uses the membrane potential as the driving force to control ATP accumulation in lysosomes and secretory vesicles. By controlling ATP storage in lysosomes, regulates ATP-dependent proteins of these organelles. Also indirectly regulates the exocytosis of ATP through its import into lysosomes in astrocytes and secretory vesicles such as adrenal chromaffin granules, mucin granules and synaptic vesicles. In Mus musculus (Mouse), this protein is Voltage-gated purine nucleotide uniporter SLC17A9.